A 518-amino-acid polypeptide reads, in one-letter code: FAD-dependent monooxygenase tpcD (518 aa).

Residues 1-22 (MQLLGTLSWLYAIQASIGSSKA) form the signal peptide. A glycan (N-linked (GlcNAc...) asparagine) is linked at Asn-61. The region spanning 75 to 246 (QSAQPACLVH…TRFDLDVFQQ (172 aa)) is the FAD-binding PCMH-type domain. His-112 is subject to Pros-8alpha-FAD histidine. N-linked (GlcNAc...) asparagine glycans are attached at residues Asn-163, Asn-208, Asn-216, and Asn-346.

It belongs to the oxygen-dependent FAD-linked oxidoreductase family. Requires FAD as cofactor.

It functions in the pathway secondary metabolite biosynthesis; terpenoid biosynthesis. FAD-dependent monooxygenase; part of the gene cluster that mediates the biosynthesis of terpestacin. The bifunctional terpene synthase tpcA converts isopentenyl diphosphate (IPP) and dimethylallyl diphosphate (DMAPP) into the sesterterpene preterpestacin I. The C-terminal prenyltransferase (PT) domain of tpcA catalyzes formation of GFPP, whereas the N-terminal terpene cyclase (TC) domain catalyzes the cyclization of GFPP into preterpestacin I. The cytochrome P450 monooxygenase tpcB then hydroxylates preterpestacin I to yield 24-hydroxypreterpstacin I (renamed as preterpestacin II) whereas the cytochrome P450 monooxygenase tpcC further hydroxylates preterpestacin II to yield 16,17-dihydroxypreterpestacin II (renamed as preterpestacin III). Finally, the FAD-dependent monooxygenase tpcD converts preterpestacin III into terpestacin. In Cochliobolus heterostrophus (strain C5 / ATCC 48332 / race O) (Southern corn leaf blight fungus), this protein is FAD-dependent monooxygenase tpcD.